A 195-amino-acid chain; its full sequence is Protein GrpE (195 aa).

Belongs to the GrpE family. In terms of assembly, homodimer.

It is found in the cytoplasm. Its function is as follows. Participates actively in the response to hyperosmotic and heat shock by preventing the aggregation of stress-denatured proteins, in association with DnaK and GrpE. It is the nucleotide exchange factor for DnaK and may function as a thermosensor. Unfolded proteins bind initially to DnaJ; upon interaction with the DnaJ-bound protein, DnaK hydrolyzes its bound ATP, resulting in the formation of a stable complex. GrpE releases ADP from DnaK; ATP binding to DnaK triggers the release of the substrate protein, thus completing the reaction cycle. Several rounds of ATP-dependent interactions between DnaJ, DnaK and GrpE are required for fully efficient folding. This is Protein GrpE from Francisella tularensis subsp. mediasiatica (strain FSC147).